Here is a 315-residue protein sequence, read N- to C-terminus: Ribosomal protein L11 methyltransferase (315 aa).

Residues T162, G183, D205, and N248 each coordinate S-adenosyl-L-methionine.

This sequence belongs to the methyltransferase superfamily. PrmA family.

The protein resides in the cytoplasm. It catalyses the reaction L-lysyl-[protein] + 3 S-adenosyl-L-methionine = N(6),N(6),N(6)-trimethyl-L-lysyl-[protein] + 3 S-adenosyl-L-homocysteine + 3 H(+). Its function is as follows. Methylates ribosomal protein L11. The polypeptide is Ribosomal protein L11 methyltransferase (Oceanobacillus iheyensis (strain DSM 14371 / CIP 107618 / JCM 11309 / KCTC 3954 / HTE831)).